The sequence spans 592 residues: MMRTHYCGSLTEAQIDQTVTLCGWVHRRRDHGGVIFLDMRDRDGLVQVVIDPDTPEAFATADKVRSEFVLKITGRVRRRYEGTENSNMVSGQIEVLGKEIEVLAQSETPPFPLNDDNINISEEHRLKYRFLDIRRPEMLDRLRFRSKVTNLIRNYLDDHGFLDVETPILTRATPEGARDYLVPSRVQNGSFYALPQSPQLFKQLLMVGGIDRYYQIAKCFRDEDLRADRQPEFTQIDIETSFLNDDDIMDLMEGMTVKLFDELLGIKFDKFQRMPYSEAMRDYASDKPDLRIPLKLVDVADLMQDVEFKVFAGPAKDPKGRIAALRVPGAGALPRSAIDEYTKFVGIYGAKGLAYIKVNEIEKGVEGLQSPIVKFIEPIVMQLLERVGAENGDIVFFGADKAKVVNDAMGALRVKIGHDLKLVTCEWAPLWVVDFPMFEETDDGKWTSVHHPFTLPKSSVEDVKANPGEALSVAYDMVLNGTEVGGGSLRIYTLEMQKAIFEALGISDEEAEEKFSFLLNALRYGAPPHGGLAFGLDRLIMLMTGASSIRDVIAFPKTKTAECPLTQAPAPVEANQLRDLGIRLREQPKKED.

Glu-175 contributes to the L-aspartate binding site. Residues 199–202 (QLFK) are aspartate. Arg-221 lines the L-aspartate pocket. ATP is bound by residues 221–223 (RDE) and Gln-230. His-450 is an L-aspartate binding site. Glu-483 is a binding site for ATP. Arg-490 is a binding site for L-aspartate. 535 to 538 (GLDR) lines the ATP pocket.

The protein belongs to the class-II aminoacyl-tRNA synthetase family. Type 1 subfamily. In terms of assembly, homodimer.

It localises to the cytoplasm. The catalysed reaction is tRNA(Asx) + L-aspartate + ATP = L-aspartyl-tRNA(Asx) + AMP + diphosphate. Aspartyl-tRNA synthetase with relaxed tRNA specificity since it is able to aspartylate not only its cognate tRNA(Asp) but also tRNA(Asn). Reaction proceeds in two steps: L-aspartate is first activated by ATP to form Asp-AMP and then transferred to the acceptor end of tRNA(Asp/Asn). This is Aspartate--tRNA(Asp/Asn) ligase from Acinetobacter baylyi (strain ATCC 33305 / BD413 / ADP1).